The following is a 138-amino-acid chain: DNA-directed RNA polymerase subunit omega (138 aa).

Belongs to the RNA polymerase subunit omega family. The RNAP catalytic core consists of 2 alpha, 1 beta, 1 beta' and 1 omega subunit. When a sigma factor is associated with the core the holoenzyme is formed, which can initiate transcription.

It catalyses the reaction RNA(n) + a ribonucleoside 5'-triphosphate = RNA(n+1) + diphosphate. Promotes RNA polymerase assembly. Latches the N- and C-terminal regions of the beta' subunit thereby facilitating its interaction with the beta and alpha subunits. This chain is DNA-directed RNA polymerase subunit omega, found in Thermodesulfovibrio yellowstonii (strain ATCC 51303 / DSM 11347 / YP87).